Here is a 344-residue protein sequence, read N- to C-terminus: Homoserine O-acetyltransferase (344 aa).

Cys-142 acts as the Acyl-thioester intermediate in catalysis. Substrate-binding residues include Lys-163 and Ser-192. His-235 serves as the catalytic Proton acceptor. Residue Glu-237 is part of the active site. A substrate-binding site is contributed by Arg-249.

It belongs to the MetA family.

It is found in the cytoplasm. The catalysed reaction is L-homoserine + acetyl-CoA = O-acetyl-L-homoserine + CoA. The protein operates within amino-acid biosynthesis; L-methionine biosynthesis via de novo pathway; O-acetyl-L-homoserine from L-homoserine: step 1/1. In terms of biological role, transfers an acetyl group from acetyl-CoA to L-homoserine, forming acetyl-L-homoserine. The protein is Homoserine O-acetyltransferase of Bifidobacterium adolescentis (strain ATCC 15703 / DSM 20083 / NCTC 11814 / E194a).